The chain runs to 894 residues: Disease resistance protein SUMM2 (894 aa).

Residues 31–71 adopt a coiled-coil conformation; that stretch reads ELSKNVVAMKKDMEVLKKKRDDVKRRVDIEEFTRRRERLSQ. The NB-ARC domain maps to 140-443; sequence TLATPIARIE…CEGFIDENES (304 aa). 183–190 contacts ATP; it reads GMGGVGKT. LRR repeat units follow at residues 517–538, 539–561, 564–586, 588–610, 611–633, 634–656, and 660–681; these read SVRR…PECL, ELTT…FFRC, MLVV…ISKL, SLRY…QELK, KLRY…SNIS, SLRK…EELQ, and HLEV…LNAP.

This sequence belongs to the disease resistance NB-LRR family. In terms of assembly, interacts with PAT1.

Negatively regulated by the MEKK1-MKK1-MKK2-MPK4 kinase cascade. Disease resistance protein that mediates defense responses against the bacterial pathogen Pseudomonas syringae pv tomato strain DC3000, and the virulent oomycete Hyaloperonospora arabidopsidis isolate Noco2. Becomes active when the MEKK1-MKK1-MKK2-MPK4 kinase cascade is disrupted by the microbial effector hopAI1. Does not seem to be required for the activation of MPK4 by flg22, or flg22-induced up-regulation of PAD3. Functions downstream of MEKK2/SUMM1 in immune responses, including cell death and defense responses. This is Disease resistance protein SUMM2 from Arabidopsis thaliana (Mouse-ear cress).